We begin with the raw amino-acid sequence, 239 residues long: Probable transcriptional regulatory protein lin0388 (239 aa).

It belongs to the TACO1 family. YeeN subfamily.

It localises to the cytoplasm. The protein is Probable transcriptional regulatory protein lin0388 of Listeria innocua serovar 6a (strain ATCC BAA-680 / CLIP 11262).